The chain runs to 361 residues: DNA replication and repair protein RecF (361 aa).

Glycine 30–threonine 37 is an ATP binding site.

The protein belongs to the RecF family.

Its subcellular location is the cytoplasm. Its function is as follows. The RecF protein is involved in DNA metabolism; it is required for DNA replication and normal SOS inducibility. RecF binds preferentially to single-stranded, linear DNA. It also seems to bind ATP. The chain is DNA replication and repair protein RecF from Yersinia pseudotuberculosis serotype O:1b (strain IP 31758).